The primary structure comprises 144 residues: Large ribosomal subunit protein uL15 (144 aa).

A disordered region spans residues 1-53 (MRLNTLSPAEGAKHNAKRLGRGIGSGLGKTSGRGHKGQKARTGGGVRRGFEGG). The segment covering 21 to 31 (RGIGSGLGKTS) has biased composition (gly residues).

The protein belongs to the universal ribosomal protein uL15 family. Part of the 50S ribosomal subunit.

In terms of biological role, binds to the 23S rRNA. The chain is Large ribosomal subunit protein uL15 from Histophilus somni (strain 129Pt) (Haemophilus somnus).